Reading from the N-terminus, the 186-residue chain is Ribosome maturation factor RimM (186 aa).

A PRC barrel domain is found at 103–174; that stretch reads PEEYHYSDLI…ELQVQPPPGL (72 aa).

This sequence belongs to the RimM family. As to quaternary structure, binds ribosomal protein uS19.

It localises to the cytoplasm. An accessory protein needed during the final step in the assembly of 30S ribosomal subunit, possibly for assembly of the head region. Essential for efficient processing of 16S rRNA. May be needed both before and after RbfA during the maturation of 16S rRNA. It has affinity for free ribosomal 30S subunits but not for 70S ribosomes. The polypeptide is Ribosome maturation factor RimM (Synechococcus sp. (strain JA-3-3Ab) (Cyanobacteria bacterium Yellowstone A-Prime)).